Reading from the N-terminus, the 213-residue chain is rRNA N(6)-adenosine-methyltransferase Mettl5 (213 aa).

S-adenosyl-L-methionine-binding positions include Gln28, Thr31, Gly59, Cys62, and 108–109; that span reads DV.

It belongs to the methyltransferase superfamily. PrmA family. Heterodimer; heterodimerizes with Trmt112. As to expression, enriched in the brain.

It localises to the cytoplasm. It carries out the reaction adenosine in rRNA + S-adenosyl-L-methionine = N(6)-methyladenosine in rRNA + S-adenosyl-L-homocysteine + H(+). Catalytic subunit of a heterodimer with Trmt112, which specifically methylates the 6th position of adenine in 18S rRNA. The polypeptide is rRNA N(6)-adenosine-methyltransferase Mettl5 (Drosophila melanogaster (Fruit fly)).